The primary structure comprises 447 residues: Kynureninase (447 aa).

Pyridoxal 5'-phosphate contacts are provided by residues L106, T107, F134–D137, D220, H223, and Y245. K246 is modified (N6-(pyridoxal phosphate)lysine). The pyridoxal 5'-phosphate site is built by W275 and N303.

The protein belongs to the kynureninase family. As to quaternary structure, homodimer. Requires pyridoxal 5'-phosphate as cofactor.

The protein localises to the cytoplasm. The catalysed reaction is L-kynurenine + H2O = anthranilate + L-alanine + H(+). The enzyme catalyses 3-hydroxy-L-kynurenine + H2O = 3-hydroxyanthranilate + L-alanine + H(+). Its pathway is amino-acid degradation; L-kynurenine degradation; L-alanine and anthranilate from L-kynurenine: step 1/1. It participates in cofactor biosynthesis; NAD(+) biosynthesis; quinolinate from L-kynurenine: step 2/3. Catalyzes the cleavage of L-kynurenine (L-Kyn) and L-3-hydroxykynurenine (L-3OHKyn) into anthranilic acid (AA) and 3-hydroxyanthranilic acid (3-OHAA), respectively. This Eremothecium gossypii (strain ATCC 10895 / CBS 109.51 / FGSC 9923 / NRRL Y-1056) (Yeast) protein is Kynureninase.